A 262-amino-acid polypeptide reads, in one-letter code: Putative outer membrane protein CPn_1034/CP_0818/CPj1034/CpB1074 (262 aa).

The N-terminal stretch at 1–17 is a signal peptide; sequence MKTWLFFTFLFSCSSFY.

It localises to the cell outer membrane. In Chlamydia pneumoniae (Chlamydophila pneumoniae), this protein is Putative outer membrane protein CPn_1034/CP_0818/CPj1034/CpB1074.